We begin with the raw amino-acid sequence, 245 residues long: Carbohydrate deacetylase (245 aa).

The Mg(2+) site is built by His59 and His121.

Belongs to the YdjC deacetylase family. As to quaternary structure, homodimer. Mg(2+) is required as a cofactor.

Probably catalyzes the deacetylation of acetylated carbohydrates an important step in the degradation of oligosaccharides. The protein is Carbohydrate deacetylase of Clostridium beijerinckii (strain ATCC 51743 / NCIMB 8052) (Clostridium acetobutylicum).